We begin with the raw amino-acid sequence, 306 residues long: MSRPRKRWRDVDGVFLLDKPQGMSSNDIMQKVKRLFQANKAGHTGALDPLATGMLPICLGEATKFSQFLLDADKRYLVTAKLGERTDTSDAEGQVVETREVHVETPQILTALEQFRGDILQVPTMFSALKHNGKPLYEYARQGITVEREARPITIFELNFIEYHAPFLTLEVHCSKGTYIRTLVDDLGEVLGCGAHVTMLRRTAVADYPVAEMIPINELQLLAESFPLSELDRLLLPTDTAVSKLPALHLDVEQSKAIGFGQRVKFANEQQLGGQVRLFSAENLFLGVALIDGNIIRPQRLITQSA.

Residue aspartate 48 is the Nucleophile of the active site.

This sequence belongs to the pseudouridine synthase TruB family. Type 1 subfamily.

The catalysed reaction is uridine(55) in tRNA = pseudouridine(55) in tRNA. Its function is as follows. Responsible for synthesis of pseudouridine from uracil-55 in the psi GC loop of transfer RNAs. This Haemophilus influenzae (strain 86-028NP) protein is tRNA pseudouridine synthase B.